A 700-amino-acid chain; its full sequence is Glycine--tRNA ligase beta subunit (700 aa).

It belongs to the class-II aminoacyl-tRNA synthetase family. As to quaternary structure, tetramer of two alpha and two beta subunits.

It is found in the cytoplasm. It catalyses the reaction tRNA(Gly) + glycine + ATP = glycyl-tRNA(Gly) + AMP + diphosphate. The polypeptide is Glycine--tRNA ligase beta subunit (Helicobacter pylori (strain Shi470)).